A 290-amino-acid polypeptide reads, in one-letter code: Zinc-finger homeodomain protein 2 (290 aa).

Residues 1–15 show a composition bias toward acidic residues; sequence MDFDDHDEGDGDEEM. The interval 1–59 is disordered; that stretch reads MDFDDHDEGDGDEEMPPMPLSSGYDAPMQPGLGGGGGGVPKPGGGVGGGGGGGGGGGGG. A compositionally biased stretch (gly residues) spans 31 to 59; sequence GLGGGGGGVPKPGGGVGGGGGGGGGGGGG. The ZF-HD dimerization-type; degenerate zinc-finger motif lies at 63–112; that stretch reads YRECLKNHAVGIGGHAVDGCGEFMASGEEGSIDALRCAACGCHRNFHRKE. Residues 226 to 289 constitute a DNA-binding region (homeobox); it reads KKRFRTKFTQ…NNKHTLGKKA (64 aa).

Homo- and heterodimer with other ZFHD proteins.

The protein localises to the nucleus. In terms of biological role, putative transcription factor. The protein is Zinc-finger homeodomain protein 2 (ZHD2) of Oryza sativa subsp. japonica (Rice).